Here is a 444-residue protein sequence, read N- to C-terminus: Transcriptional regulatory protein GlrR (444 aa).

The region spanning 7–121 (HLLLVDDDPG…ALYQAIDDAL (115 aa)) is the Response regulatory domain. Asp56 carries the post-translational modification 4-aspartylphosphate. The Sigma-54 factor interaction domain maps to 136 to 366 (IVTRSPLMLR…VNVIEQCVAL (231 aa)). ATP-binding positions include 164–171 (GQSGTGKE) and 227–236 (AEGGTLFLDE). Residues 414 to 433 (VTHAARMAGRNRTEFYKLLS) constitute a DNA-binding region (H-T-H motif).

In terms of processing, phosphorylated by GlrK.

The protein resides in the cytoplasm. In terms of biological role, member of the two-component regulatory system GlrR/GlrK that up-regulates transcription of the glmY sRNA when cells enter the stationary growth phase. Regulates glmY transcription by binding to three conserved sites in the purL-glmY intergenic region. The polypeptide is Transcriptional regulatory protein GlrR (glrR) (Escherichia coli (strain K12)).